A 208-amino-acid chain; its full sequence is uncharacterized protein (208 aa).

The N-terminal stretch at 1 to 16 (MKFLLIACLAVPAILA) is a signal peptide. A glycan (N-linked (GlcNAc...) asparagine) is linked at Asn79.

This is an uncharacterized protein from Caenorhabditis elegans.